We begin with the raw amino-acid sequence, 315 residues long: Kinetochore protein SPC25 homolog (315 aa).

Met1 is subject to N-acetylmethionine. Positions 57 to 91 (TAQSQVELMNLKADLREAEDELVKVLAVKTRKEAR) form a coiled coil. The tract at residues 261–315 (APAISFSTDTNMSTPENKRSKVQVNRRQKRGSESPLLAPVSTSATRRSSRFKGKK) is disordered. Polar residues predominate over residues 266–275 (FSTDTNMSTP). Residues 280 to 289 (SKVQVNRRQK) are compositionally biased toward basic residues.

This sequence belongs to the SPC25 family. Component of the NDC80 complex, which consists of NDC80, NUF2, SPC24 and SPC25.

It is found in the chromosome. It localises to the centromere. In terms of biological role, acts as a component of the essential kinetochore-associated NDC80 complex, which is required for chromosome segregation and spindle checkpoint activity to ensure proper cell division. The sequence is that of Kinetochore protein SPC25 homolog from Arabidopsis thaliana (Mouse-ear cress).